The chain runs to 134 residues: MRHGISCRKFSRPTAHRLSMLANLAVSLIRHERIVTTVAKAKDLRPFVERLVTVGRRLAKKDPVRGRRLLLSKMGGDLDAVNKLLDVLAKRYARRPGGYTRILKNGFRAGDCAPIAIMEFVDRKEGEPKKVAEG.

The protein belongs to the bacterial ribosomal protein bL17 family. Part of the 50S ribosomal subunit. Contacts protein L32.

This is Large ribosomal subunit protein bL17 from Anaplasma marginale (strain Florida).